The chain runs to 443 residues: Signal recognition particle 54 kDa protein (443 aa).

Residues 107 to 114 (GVQGSGKT), 189 to 193 (DTAGR), and 247 to 250 (TKLD) contribute to the GTP site.

This sequence belongs to the GTP-binding SRP family. SRP54 subfamily. In terms of assembly, part of the signal recognition particle protein translocation system, which is composed of SRP and FtsY. Archaeal SRP consists of a 7S RNA molecule of 300 nucleotides and two protein subunits: SRP54 and SRP19.

Its subcellular location is the cytoplasm. It carries out the reaction GTP + H2O = GDP + phosphate + H(+). Functionally, involved in targeting and insertion of nascent membrane proteins into the cytoplasmic membrane. Binds to the hydrophobic signal sequence of the ribosome-nascent chain (RNC) as it emerges from the ribosomes. The SRP-RNC complex is then targeted to the cytoplasmic membrane where it interacts with the SRP receptor FtsY. The protein is Signal recognition particle 54 kDa protein of Pyrococcus horikoshii (strain ATCC 700860 / DSM 12428 / JCM 9974 / NBRC 100139 / OT-3).